The following is a 468-amino-acid chain: RuvB-like helicase 2 (468 aa).

An ATP-binding site is contributed by 76–83; the sequence is GPPSTGKT.

The protein belongs to the RuvB family. May form heterododecamers with RVB1. Component of the SWR1 chromatin remodeling complex, the INO80 chromatin remodeling complex, and of the R2TP complex.

The protein localises to the nucleus. The enzyme catalyses ATP + H2O = ADP + phosphate + H(+). Its function is as follows. DNA helicase which participates in several chromatin remodeling complexes, including the SWR1 and the INO80 complexes. The SWR1 complex mediates the ATP-dependent exchange of histone H2A for the H2A variant HZT1 leading to transcriptional regulation of selected genes by chromatin remodeling. The INO80 complex remodels chromatin by shifting nucleosomes and is involved in DNA repair. Also involved in pre-rRNA processing. The polypeptide is RuvB-like helicase 2 (rvb2) (Emericella nidulans (strain FGSC A4 / ATCC 38163 / CBS 112.46 / NRRL 194 / M139) (Aspergillus nidulans)).